Consider the following 328-residue polypeptide: Glutathionyl-hydroquinone reductase YqjG (328 aa).

C63 functions as the Nucleophile in the catalytic mechanism. Residues W96, 130–133 (RVTV), and 148–149 (ES) contribute to the glutathione site. The GST C-terminal domain maps to 172-296 (PPALQTKIDE…VNFDHIRNHY (125 aa)). Catalysis depends on Y195, which acts as the Proton donor/acceptor. Residues 203–311 (QEAYDEAVAK…TINPTGIISI (109 aa)) are dimerization.

It belongs to the GST superfamily. Xi-class GSH transferase family. In terms of assembly, homodimer.

The enzyme catalyses 2-(glutathione-S-yl)-hydroquinone + glutathione = hydroquinone + glutathione disulfide. In terms of biological role, catalyzes glutathione (GSH)-dependent reduction of glutathionyl-hydroquinones (GS-HQs) to the corresponding hydroquinones. Can use a variety of GS-HQs as substrates, such as GS-p-hydroquinone (GS-HQ), GS-hydroxy-p-hydroquinone (GS-HHQ), GS-methyl-p-hydroquinone (GS-MHQ), GS-menadiol, and GS-trichloro-p-hydroquinone (GS-TriCH). Also displays GSH-dependent disulfide-bond reduction activity toward HED (2-hydroxyethyl disulfide), and is able to catalyze DMA (dimethylarsinate) reduction. Exhibits no GSH transferase activity with 1-chloro-2,4-dinitrobenzene (CDNB). The chain is Glutathionyl-hydroquinone reductase YqjG (yqjG) from Escherichia coli (strain K12).